Reading from the N-terminus, the 74-residue chain is Large ribosomal subunit protein bL31 (74 aa).

The protein belongs to the bacterial ribosomal protein bL31 family. Type A subfamily. As to quaternary structure, part of the 50S ribosomal subunit.

Its function is as follows. Binds the 23S rRNA. This Synechococcus sp. (strain JA-2-3B'a(2-13)) (Cyanobacteria bacterium Yellowstone B-Prime) protein is Large ribosomal subunit protein bL31.